Here is a 921-residue protein sequence, read N- to C-terminus: Valine--tRNA ligase (921 aa).

The short motif at 40-50 (PNVTGSLHMGH) is the 'HIGH' region element. The short motif at 522–526 (KMSKS) is the 'KMSKS' region element. Lysine 525 contacts ATP. A coiled-coil region spans residues 849-921 (MADLIDKEAE…LQHKNRIESL (73 aa)).

It belongs to the class-I aminoacyl-tRNA synthetase family. ValS type 1 subfamily. In terms of assembly, monomer.

The protein resides in the cytoplasm. The catalysed reaction is tRNA(Val) + L-valine + ATP = L-valyl-tRNA(Val) + AMP + diphosphate. In terms of biological role, catalyzes the attachment of valine to tRNA(Val). As ValRS can inadvertently accommodate and process structurally similar amino acids such as threonine, to avoid such errors, it has a 'posttransfer' editing activity that hydrolyzes mischarged Thr-tRNA(Val) in a tRNA-dependent manner. The protein is Valine--tRNA ligase of Legionella pneumophila (strain Paris).